The following is a 65-amino-acid chain: Small ribosomal subunit protein bS21 (65 aa).

This sequence belongs to the bacterial ribosomal protein bS21 family.

The protein is Small ribosomal subunit protein bS21 of Acidobacterium capsulatum (strain ATCC 51196 / DSM 11244 / BCRC 80197 / JCM 7670 / NBRC 15755 / NCIMB 13165 / 161).